A 210-amino-acid chain; its full sequence is Thymidylate kinase (210 aa).

An ATP-binding site is contributed by 10–17; sequence GPEGAGKS.

This sequence belongs to the thymidylate kinase family.

The enzyme catalyses dTMP + ATP = dTDP + ADP. Functionally, phosphorylation of dTMP to form dTDP in both de novo and salvage pathways of dTTP synthesis. This is Thymidylate kinase from Pseudomonas fluorescens (strain SBW25).